We begin with the raw amino-acid sequence, 69 residues long: ATP synthase F(0) complex subunit e, mitochondrial (69 aa).

K34 carries the N6-acetyllysine modification.

Belongs to the ATPase e subunit family. In terms of assembly, component of the ATP synthase complex composed at least of ATP5F1A/subunit alpha, ATP5F1B/subunit beta, ATP5MC1/subunit c (homooctomer), MT-ATP6/subunit a, MT-ATP8/subunit 8, ATP5ME/subunit e, ATP5MF/subunit f, ATP5MG/subunit g, ATP5MK/subunit k, ATP5MJ/subunit j, ATP5F1C/subunit gamma, ATP5F1D/subunit delta, ATP5F1E/subunit epsilon, ATP5PF/subunit F6, ATP5PB/subunit b, ATP5PD/subunit d, ATP5PO/subunit OSCP. ATP synthase complex consists of a soluble F(1) head domain (subunits alpha(3) and beta(3)) - the catalytic core - and a membrane F(0) domain - the membrane proton channel (subunits c, a, 8, e, f, g, k and j). These two domains are linked by a central stalk (subunits gamma, delta, and epsilon) rotating inside the F1 region and a stationary peripheral stalk (subunits F6, b, d, and OSCP).

It is found in the mitochondrion. The protein resides in the mitochondrion inner membrane. In terms of biological role, subunit e, of the mitochondrial membrane ATP synthase complex (F(1)F(0) ATP synthase or Complex V) that produces ATP from ADP in the presence of a proton gradient across the membrane which is generated by electron transport complexes of the respiratory chain. ATP synthase complex consist of a soluble F(1) head domain - the catalytic core - and a membrane F(1) domain - the membrane proton channel. These two domains are linked by a central stalk rotating inside the F(1) region and a stationary peripheral stalk. During catalysis, ATP synthesis in the catalytic domain of F(1) is coupled via a rotary mechanism of the central stalk subunits to proton translocation. In vivo, can only synthesize ATP although its ATP hydrolase activity can be activated artificially in vitro. Part of the complex F(0) domain. The sequence is that of ATP synthase F(0) complex subunit e, mitochondrial from Cricetulus longicaudatus (Long-tailed dwarf hamster).